We begin with the raw amino-acid sequence, 369 residues long: Putative protein FAM10A5 (369 aa).

The tract at residues 38–98 (MGGKVPPATQ…IEPDTDAPQE (61 aa)) is disordered. The span at 49 to 73 (AKSEENTKEEKPDSKKVEEDLKADE) shows a compositional bias: basic and acidic residues. The segment covering 89-98 (IEPDTDAPQE) has biased composition (acidic residues). TPR repeat units follow at residues 114-147 (ANDK…NPRL), 149-181 (ILYA…NPDS), and 183-215 (QPYK…DYDE). Residues 256–272 (KAQEEQERAQREEEARR) show a composition bias toward basic and acidic residues. A disordered region spans residues 256–300 (KAQEEQERAQREEEARRQSGAHYGPFPGGFPGGMPGNFPGGMPGM). Positions 281–300 (FPGGFPGGMPGNFPGGMPGM) are enriched in gly residues. One can recognise an STI1 domain in the interval 319 to 358 (DPEALAAMQDPEVMVAFQDVAQNPANMSKYQSNPKVMNLI). Position 346 is a phosphoserine (S346). 2 positions are modified to N6-acetyllysine: K353 and K360.

This sequence belongs to the FAM10 family.

It is found in the cytoplasm. This is Putative protein FAM10A5 (ST13P5) from Homo sapiens (Human).